Here is a 276-residue protein sequence, read N- to C-terminus: Glutamate racemase (276 aa).

Residues 10–11 and 42–43 each bind substrate; these read DS and YG. Cys74 (proton donor/acceptor) is an active-site residue. Substrate is bound at residue 75–76; it reads NT. The active-site Proton donor/acceptor is Cys185. A substrate-binding site is contributed by 186–187; that stretch reads TH.

Belongs to the aspartate/glutamate racemases family.

The enzyme catalyses L-glutamate = D-glutamate. Its pathway is cell wall biogenesis; peptidoglycan biosynthesis. Its function is as follows. Provides the (R)-glutamate required for cell wall biosynthesis. This chain is Glutamate racemase, found in Levilactobacillus brevis (strain ATCC 367 / BCRC 12310 / CIP 105137 / JCM 1170 / LMG 11437 / NCIMB 947 / NCTC 947) (Lactobacillus brevis).